The chain runs to 133 residues: ATP synthase epsilon chain, chloroplastic (133 aa).

This sequence belongs to the ATPase epsilon chain family. As to quaternary structure, F-type ATPases have 2 components, CF(1) - the catalytic core - and CF(0) - the membrane proton channel. CF(1) has five subunits: alpha(3), beta(3), gamma(1), delta(1), epsilon(1). CF(0) has three main subunits: a, b and c.

Its subcellular location is the plastid. The protein localises to the chloroplast thylakoid membrane. Produces ATP from ADP in the presence of a proton gradient across the membrane. This chain is ATP synthase epsilon chain, chloroplastic, found in Citrus sinensis (Sweet orange).